A 141-amino-acid polypeptide reads, in one-letter code: Endoribonuclease YbeY (141 aa).

Zn(2+) is bound by residues His107, His111, and His117.

Belongs to the endoribonuclease YbeY family. Requires Zn(2+) as cofactor.

The protein resides in the cytoplasm. Single strand-specific metallo-endoribonuclease involved in late-stage 70S ribosome quality control and in maturation of the 3' terminus of the 16S rRNA. The sequence is that of Endoribonuclease YbeY from Leptospira interrogans serogroup Icterohaemorrhagiae serovar Lai (strain 56601).